Reading from the N-terminus, the 147-residue chain is uncharacterized protein (147 aa).

This is an uncharacterized protein from Gallid herpesvirus 2 (strain Chicken/Md5/ATCC VR-987) (GaHV-2).